The primary structure comprises 276 residues: 4-chlorobenzoyl coenzyme A dehalogenase-2 (276 aa).

66–71 (AGFDLE) is a binding site for substrate. Histidine 93 (proton acceptor) is an active-site residue. Glycine 117 contacts substrate. The active-site Nucleophile is the aspartate 148. Arginine 261 is a binding site for substrate.

The protein belongs to the enoyl-CoA hydratase/isomerase family. In terms of assembly, homotetramer.

The enzyme catalyses 4-chlorobenzoyl-CoA + H2O = 4-hydroxybenzoyl-CoA + chloride + H(+). It participates in xenobiotic degradation; 4-chlorobenzoate degradation; 4-hydroxybenzoate from 4-chlorobenzoate: step 2/3. Its function is as follows. Dehalogenates 4-chlorobenzoyl-CoA, 4-iodobenzoyl-CoA, 4-bromobenzoyl-CoA and, at a slower rate, 4-fluorobenzoyl-CoA. Does not dehalogenate 2-chlorobenzoyl-CoA or 3-chlorobenzoyl-CoA. This Arthrobacter sp protein is 4-chlorobenzoyl coenzyme A dehalogenase-2.